Reading from the N-terminus, the 572-residue chain is Sorting nexin 2B (572 aa).

Disordered regions lie at residues 1 to 97 (MMGS…SSYL) and 114 to 136 (SEIN…SPSS). Over residues 9-30 (ESHLHSSKEEMEKLFLREDGDP) the composition is skewed to basic and acidic residues. Polar residues predominate over residues 32 to 53 (TKSNVNGDKSNSNYRSAMSTLF). A compositionally biased stretch (low complexity) spans 124 to 136 (SQSSDSLSRSPSS). Serine 133 is modified (phosphoserine). Residues 147–266 (SNPQKEQEAT…KVFLQAQGKL (120 aa)) enclose the PX domain. Arginine 190, lysine 216, and arginine 233 together coordinate a 1,2-diacyl-sn-glycero-3-phospho-(1D-myo-inositol-3-phosphate). The 255-residue stretch at 318-572 (LRQSVSNDWG…ETRQYDRESS (255 aa)) folds into the BAR domain.

The protein belongs to the sorting nexin family. As to quaternary structure, homodimer. Heterodimer with SNX1 or SNX2B. Component of the retromer complex which consists of VPS29 (MAG1), VPS26 (VPS26A or VPS26B), VPS35 (VPS35A or VPS35B or VPS35C), VPS5/17 (SNX1 or SNX2A or SNX2B). As to expression, ubiquitously expressed.

The protein resides in the cytoplasm. Its subcellular location is the endosome membrane. It localises to the prevacuolar compartment membrane. It is found in the golgi apparatus. The protein localises to the trans-Golgi network membrane. Plays a role in vesicular protein sorting. Acts at the crossroads between the secretory and endocytic pathways. Is involved in the endosome to vacuole protein transport and, as component of the membrane-associated retromer complex, is also involved in endosome-to-Golgi retrograde transport. The chain is Sorting nexin 2B (SNX2B) from Arabidopsis thaliana (Mouse-ear cress).